The following is a 375-amino-acid chain: Alpha-2,8-sialyltransferase 8B (375 aa).

At 1–6 (MQLQFR) the chain is on the cytoplasmic side. The chain crosses the membrane as a helical; Signal-anchor for type II membrane protein span at residues 7–23 (SWMLAALTLLVVFLIFA). Topologically, residues 24–375 (DISEIEEEIG…LTVGQCDGAT (352 aa)) are lumenal. Residues asparagine 60, asparagine 72, asparagine 89, and asparagine 134 are each glycosylated (N-linked (GlcNAc...) asparagine). Disulfide bonds link cysteine 157–cysteine 307 and cysteine 171–cysteine 371. Residues asparagine 162 and asparagine 185 each contribute to the CMP-N-acetyl-beta-neuraminate site. N-linked (GlcNAc...) asparagine glycans are attached at residues asparagine 219 and asparagine 234. CMP-N-acetyl-beta-neuraminate contacts are provided by threonine 294, threonine 295, glycine 296, tryptophan 316, tyrosine 329, and histidine 330. Histidine 346 (proton donor/acceptor) is an active-site residue.

The protein belongs to the glycosyltransferase 29 family. In terms of processing, autopolysialylated. Autopolysialylation is not a prerequisite for the polysialylation acitity, but enhances the polysialylation acitity. As to expression, highly expressed in fetal brain, kidney and heart and to a much lesser extent in adult heart and thymus.

It localises to the golgi apparatus membrane. It is found in the secreted. The protein localises to the cell membrane. It catalyses the reaction [N-acetyl-alpha-D-neuraminosyl-(2-&gt;8)](n) + CMP-N-acetyl-beta-neuraminate = [N-acetyl-alpha-D-neuraminosyl-(2-&gt;8)](n+1) + CMP + H(+). It participates in protein modification; protein glycosylation. Functionally, catalyzes the transfer of a sialic acid from a CMP-linked sialic acid donor onto a terminal alpha-2,3-, alpha-2,6-, or alpha-2,8-linked sialic acid of an N-linked glycan acceptor through alpha-2,8-linkages. Therefore, participates in polysialic acid synthesis on various sialylated N-acetyllactosaminyl oligosaccharides (alpha-2,3-, alpha-2,6-, or alpha-2,8-linked sialic acid), including NCAM1, NCAM1 N-glycans, FETUB N-glycans, and to a lesser extent sialylparagloboside (SPG) and AHSG, which does not require the initial addition of an alpha 2,8-sialic acid. However, does not exhibit sialic acid-polymerase activity. Catalyzes polysialic acid synthesis in the hippocampal on NCAM1 and supports neurite outgrowth. ST8SIA2-mediated polysialylation influences on oligodendrocyte differentiation and may promote the integrity of myelin and axons. The polypeptide is Alpha-2,8-sialyltransferase 8B (Homo sapiens (Human)).